The sequence spans 264 residues: Regulatory protein RecX (264 aa).

It belongs to the RecX family.

Its subcellular location is the cytoplasm. Modulates RecA activity. The sequence is that of Regulatory protein RecX from Limosilactobacillus reuteri (strain DSM 20016) (Lactobacillus reuteri).